A 360-amino-acid chain; its full sequence is Phospho-N-acetylmuramoyl-pentapeptide-transferase (360 aa).

10 helical membrane passes run 25–45, 74–94, 97–117, 134–154, 168–188, 199–219, 236–256, 263–283, 288–308, and 339–359; these read RAILSVLTALGISLLLGPWVI, MGGALILSAMFISTLLWSDFG, YVWVVLIVTAIFGAVGWVDDY, YFWQSIAGFGAAVFLFCTAQA, VALNMGLFYIIFTYFVIVGTS, GLAIMPSVMVAGALALIAYLA, AGELAVFCCALVGAGLGFLWF, VFMGDVGALALGAALGLVAVI, FVLFIMGGIFVLETVSVILQV, and IVRFWIITLVLVLIGLATLKF.

This sequence belongs to the glycosyltransferase 4 family. MraY subfamily. Mg(2+) is required as a cofactor.

The protein localises to the cell inner membrane. It carries out the reaction UDP-N-acetyl-alpha-D-muramoyl-L-alanyl-gamma-D-glutamyl-meso-2,6-diaminopimeloyl-D-alanyl-D-alanine + di-trans,octa-cis-undecaprenyl phosphate = di-trans,octa-cis-undecaprenyl diphospho-N-acetyl-alpha-D-muramoyl-L-alanyl-D-glutamyl-meso-2,6-diaminopimeloyl-D-alanyl-D-alanine + UMP. Its pathway is cell wall biogenesis; peptidoglycan biosynthesis. Functionally, catalyzes the initial step of the lipid cycle reactions in the biosynthesis of the cell wall peptidoglycan: transfers peptidoglycan precursor phospho-MurNAc-pentapeptide from UDP-MurNAc-pentapeptide onto the lipid carrier undecaprenyl phosphate, yielding undecaprenyl-pyrophosphoryl-MurNAc-pentapeptide, known as lipid I. The sequence is that of Phospho-N-acetylmuramoyl-pentapeptide-transferase from Cellvibrio japonicus (strain Ueda107) (Pseudomonas fluorescens subsp. cellulosa).